Reading from the N-terminus, the 398-residue chain is Tyrosine--tRNA ligase (398 aa).

The 'HIGH' region motif lies at 42-51 (PTAPDLHLGH). Residues 226 to 230 (KMSKS) carry the 'KMSKS' region motif. An ATP-binding site is contributed by K229. One can recognise an S4 RNA-binding domain in the interval 341–397 (AFLEAAGLVKSRGEAKRLIKEGALSVDGVRCDDANSPLASGEYVIKLGKKRFLRLTV).

This sequence belongs to the class-I aminoacyl-tRNA synthetase family. TyrS type 2 subfamily. In terms of assembly, homodimer.

The protein localises to the cytoplasm. It carries out the reaction tRNA(Tyr) + L-tyrosine + ATP = L-tyrosyl-tRNA(Tyr) + AMP + diphosphate + H(+). In terms of biological role, catalyzes the attachment of tyrosine to tRNA(Tyr) in a two-step reaction: tyrosine is first activated by ATP to form Tyr-AMP and then transferred to the acceptor end of tRNA(Tyr). The sequence is that of Tyrosine--tRNA ligase from Nitratidesulfovibrio vulgaris (strain ATCC 29579 / DSM 644 / CCUG 34227 / NCIMB 8303 / VKM B-1760 / Hildenborough) (Desulfovibrio vulgaris).